The chain runs to 722 residues: Fatty acid oxidation complex subunit alpha (722 aa).

The tract at residues 1–189 (MIYQGKSLSA…AQGAIDAVVE (189 aa)) is enoyl-CoA hydratase/isomerase. Residue aspartate 296 coordinates substrate. Residues 311–722 (TKAVNKAAVL…SYFTTDVKLA (412 aa)) form a 3-hydroxyacyl-CoA dehydrogenase region. NAD(+) contacts are provided by residues methionine 325, aspartate 344, 401 to 403 (VVE), lysine 408, and serine 430. Histidine 451 serves as the catalytic For 3-hydroxyacyl-CoA dehydrogenase activity. Asparagine 454 contacts NAD(+). Residues asparagine 501 and tyrosine 661 each coordinate substrate.

The protein in the N-terminal section; belongs to the enoyl-CoA hydratase/isomerase family. This sequence in the C-terminal section; belongs to the 3-hydroxyacyl-CoA dehydrogenase family. Heterotetramer of two alpha chains (FadB) and two beta chains (FadA).

It carries out the reaction a (3S)-3-hydroxyacyl-CoA + NAD(+) = a 3-oxoacyl-CoA + NADH + H(+). The enzyme catalyses a (3S)-3-hydroxyacyl-CoA = a (2E)-enoyl-CoA + H2O. It catalyses the reaction a 4-saturated-(3S)-3-hydroxyacyl-CoA = a (3E)-enoyl-CoA + H2O. The catalysed reaction is (3S)-3-hydroxybutanoyl-CoA = (3R)-3-hydroxybutanoyl-CoA. It carries out the reaction a (3Z)-enoyl-CoA = a 4-saturated (2E)-enoyl-CoA. The enzyme catalyses a (3E)-enoyl-CoA = a 4-saturated (2E)-enoyl-CoA. Its pathway is lipid metabolism; fatty acid beta-oxidation. Involved in the aerobic and anaerobic degradation of long-chain fatty acids via beta-oxidation cycle. Catalyzes the formation of 3-oxoacyl-CoA from enoyl-CoA via L-3-hydroxyacyl-CoA. It can also use D-3-hydroxyacyl-CoA and cis-3-enoyl-CoA as substrate. This chain is Fatty acid oxidation complex subunit alpha, found in Colwellia psychrerythraea (strain 34H / ATCC BAA-681) (Vibrio psychroerythus).